Consider the following 545-residue polypeptide: Glucose-6-phosphate isomerase (545 aa).

E351 serves as the catalytic Proton donor. Catalysis depends on residues H382 and K510.

The protein belongs to the GPI family.

It is found in the cytoplasm. It carries out the reaction alpha-D-glucose 6-phosphate = beta-D-fructose 6-phosphate. It participates in carbohydrate biosynthesis; gluconeogenesis. It functions in the pathway carbohydrate degradation; glycolysis; D-glyceraldehyde 3-phosphate and glycerone phosphate from D-glucose: step 2/4. In terms of biological role, catalyzes the reversible isomerization of glucose-6-phosphate to fructose-6-phosphate. This Shewanella pealeana (strain ATCC 700345 / ANG-SQ1) protein is Glucose-6-phosphate isomerase.